Reading from the N-terminus, the 572-residue chain is DnaJ protein ERDJ3A (572 aa).

Residues Met1–Ala23 form the signal peptide. A J domain is found at Asp27 to Gly91. The stretch at Ile394–Lys423 forms a coiled coil. The disordered stretch occupies residues Lys419–Leu439. The span at Ser422–Glu432 shows a compositional bias: polar residues. N-linked (GlcNAc...) asparagine glycosylation occurs at Asn431.

As to quaternary structure, interacts with BIP1 and BIP3. The interaction with BIP1 and BIP3 activates the ATPase enzyme activities of BIP1 and BIP3. Post-translationally, not N-glycosylated. As to expression, expressed in roots, leaves, stems, flowers, mature pollen grains and growing pollen tubes.

The protein localises to the endoplasmic reticulum lumen. In terms of biological role, regulates protein folding in the endoplasmic reticulum (ER) lumen. Functions probably as a co-molecular chaperone that is required for normal growth of pollen tubes under high-temperature stress. The protein is DnaJ protein ERDJ3A (ERDJ3A) of Arabidopsis thaliana (Mouse-ear cress).